The primary structure comprises 89 residues: Small membrane A-kinase anchor protein (89 aa).

Residues 1–29 (MGCMKSKRRDPTQNSDSSEKVDGKPGKHG) form a disordered region. Residue Gly-2 is the site of N-myristoyl glycine attachment. The segment covering 17-29 (SSEKVDGKPGKHG) has biased composition (basic and acidic residues).

It belongs to the small membrane AKAP family. In terms of processing, may be palmitoylated at Cys-3.

The protein resides in the cell membrane. In terms of biological role, binds to type I regulatory subunits of protein kinase A and may anchor/target them to the plasma membrane. This is Small membrane A-kinase anchor protein from Danio rerio (Zebrafish).